Consider the following 258-residue polypeptide: Acyl-[acyl-carrier-protein]--UDP-N-acetylglucosamine O-acyltransferase (258 aa).

This sequence belongs to the transferase hexapeptide repeat family. LpxA subfamily. Homotrimer.

The protein resides in the cytoplasm. The catalysed reaction is a (3R)-hydroxyacyl-[ACP] + UDP-N-acetyl-alpha-D-glucosamine = a UDP-3-O-[(3R)-3-hydroxyacyl]-N-acetyl-alpha-D-glucosamine + holo-[ACP]. It functions in the pathway glycolipid biosynthesis; lipid IV(A) biosynthesis; lipid IV(A) from (3R)-3-hydroxytetradecanoyl-[acyl-carrier-protein] and UDP-N-acetyl-alpha-D-glucosamine: step 1/6. Its function is as follows. Involved in the biosynthesis of lipid A, a phosphorylated glycolipid that anchors the lipopolysaccharide to the outer membrane of the cell. This Neisseria gonorrhoeae (strain ATCC 700825 / FA 1090) protein is Acyl-[acyl-carrier-protein]--UDP-N-acetylglucosamine O-acyltransferase.